The primary structure comprises 504 residues: Hexose transporter 1 (504 aa).

The Cytoplasmic segment spans residues 1-29; the sequence is MTKSSKDICSENEGKKNGKSGFFSTSFKY. A helical membrane pass occupies residues 30–50; the sequence is VLSACIASFIFGYQVSVLNTI. Over 51 to 78 the chain is Extracellular; the sequence is KNFIVVEFEWCKGEKDRLNCSNNTIQSS. The cysteines at positions 61 and 70 are disulfide-linked. A helical transmembrane segment spans residues 79–99; that stretch reads FLLASVFIGAVLGCGFSGYLV. Over 100 to 104 the chain is Cytoplasmic; the sequence is QFGRR. A helical membrane pass occupies residues 105-125; the sequence is LSLLIIYNFFFLVSILTSITH. Residues 126–129 lie on the Extracellular side of the membrane; it reads HFHT. The helical transmembrane segment at 130-150 threads the bilayer; it reads ILFARLLSGFGIGLVTVSVPM. Over 151 to 165 the chain is Cytoplasmic; it reads YISEMTHKDKKGAYG. The helical transmembrane segment at 166 to 186 threads the bilayer; that stretch reads VMHQLFITFGIFVAVMLGLAM. Gln-169 contributes to the alpha-D-glucose binding site. Gln-169 serves as a coordination point for beta-D-glucose. The Extracellular portion of the chain corresponds to 187-207; the sequence is GEGPKADSTEPLTSFAKLWWR. The helical transmembrane segment at 208–228 threads the bilayer; it reads LMFLFPSVISLIGILALVVFF. The Cytoplasmic portion of the chain corresponds to 229–293; the sequence is KEETPYFLFE…SALKIPSYRY (65 aa). A helical transmembrane segment spans residues 294 to 314; sequence VIILGCLLSGLQQFTGINVLV. Alpha-D-glucose is bound by residues Gln-305, Gln-306, and Asn-311. Residue Gln-305 coordinates beta-D-glucose. Beta-D-glucose is bound at residue Asn-311. Residues 315-331 are Extracellular-facing; sequence SNSNELYKEFLDSHLIT. Residues 332–352 form a helical membrane-spanning segment; sequence ILSVVMTAVNFLMTFPAIYIV. A beta-D-glucose-binding site is contributed by Asn-341. Residues 353 to 358 lie on the Cytoplasmic side of the membrane; it reads EKLGRK. Residues 359-379 form a helical membrane-spanning segment; sequence TLLLWGCVGVLVAYLPTAIAN. Over 380 to 392 the chain is Extracellular; that stretch reads EINRNSNFVKILS. A helical transmembrane segment spans residues 393-413; that stretch reads IVATFVMIISFAVSYGPVLWI. Residue Trp-412 coordinates alpha-D-glucose. Residues 414–429 lie on the Cytoplasmic side of the membrane; the sequence is YLHEMFPSEIKDSAAS. Residues 430–450 traverse the membrane as a helical segment; that stretch reads LASLVNWVCAIIVVFPSDIII. Residues 451–455 lie on the Extracellular side of the membrane; that stretch reads KKSPS. A helical transmembrane segment spans residues 456–476; that stretch reads ILFIVFSVMSILTFFFIFFFI. Residues 477 to 504 are Cytoplasmic-facing; sequence KETKGGEIGTSPYITMEERQKHMTKSVV.

The protein belongs to the major facilitator superfamily. Sugar transporter (TC 2.A.1.1) family. As to quaternary structure, homodimer.

It localises to the cell membrane. The catalysed reaction is D-glucose(out) = D-glucose(in). The enzyme catalyses D-fructose(out) = D-fructose(in). It catalyses the reaction D-galactose(in) = D-galactose(out). It carries out the reaction D-mannose(out) = D-mannose(in). The catalysed reaction is D-glucosamine(out) = D-glucosamine(in). The enzyme catalyses D-xylose(out) = D-xylose(in). Inhibited by cytochalasin B. Inhibited by compound 3361 (3-O-((undec-10-en)-1-yl)-D-glucose). Inhibited by compound HTI-1. In terms of biological role, sodium-independent facilitative hexose transporter. Can transport D-glucose and D-fructose. Can transport D-mannose, D-galactose, D-xylose and D-glucosamine. This Plasmodium falciparum (isolate 3D7) protein is Hexose transporter 1.